Reading from the N-terminus, the 77-residue chain is Large ribosomal subunit protein eL20 (77 aa).

It belongs to the eukaryotic ribosomal protein eL20 family. As to quaternary structure, part of the 50S ribosomal subunit. Binds 23S rRNA.

The chain is Large ribosomal subunit protein eL20 from Pyrococcus abyssi (strain GE5 / Orsay).